Reading from the N-terminus, the 143-residue chain is Large ribosomal subunit protein uL13 (143 aa).

It belongs to the universal ribosomal protein uL13 family. As to quaternary structure, part of the 50S ribosomal subunit.

Functionally, this protein is one of the early assembly proteins of the 50S ribosomal subunit, although it is not seen to bind rRNA by itself. It is important during the early stages of 50S assembly. This Albidiferax ferrireducens (strain ATCC BAA-621 / DSM 15236 / T118) (Rhodoferax ferrireducens) protein is Large ribosomal subunit protein uL13.